The following is a 151-amino-acid chain: Phosphoribosyl-AMP cyclohydrolase (151 aa).

Asp94 is a Mg(2+) binding site. Cys95 lines the Zn(2+) pocket. Positions 96 and 98 each coordinate Mg(2+). Zn(2+) contacts are provided by Cys112 and Cys119.

The protein belongs to the PRA-CH family. As to quaternary structure, homodimer. Mg(2+) serves as cofactor. Requires Zn(2+) as cofactor.

Its subcellular location is the cytoplasm. The catalysed reaction is 1-(5-phospho-beta-D-ribosyl)-5'-AMP + H2O = 1-(5-phospho-beta-D-ribosyl)-5-[(5-phospho-beta-D-ribosylamino)methylideneamino]imidazole-4-carboxamide. The protein operates within amino-acid biosynthesis; L-histidine biosynthesis; L-histidine from 5-phospho-alpha-D-ribose 1-diphosphate: step 3/9. Functionally, catalyzes the hydrolysis of the adenine ring of phosphoribosyl-AMP. The protein is Phosphoribosyl-AMP cyclohydrolase of Rhodopseudomonas palustris (strain TIE-1).